Here is a 265-residue protein sequence, read N- to C-terminus: 5'-nucleotidase SurE (265 aa).

A divalent metal cation-binding residues include D9, D10, S40, and N96.

Belongs to the SurE nucleotidase family. It depends on a divalent metal cation as a cofactor.

The protein resides in the cytoplasm. It carries out the reaction a ribonucleoside 5'-phosphate + H2O = a ribonucleoside + phosphate. Its function is as follows. Nucleotidase that shows phosphatase activity on nucleoside 5'-monophosphates. In Methanothrix thermoacetophila (strain DSM 6194 / JCM 14653 / NBRC 101360 / PT) (Methanosaeta thermophila), this protein is 5'-nucleotidase SurE.